Consider the following 174-residue polypeptide: Large ribosomal subunit protein bL17 (174 aa).

Belongs to the bacterial ribosomal protein bL17 family. Part of the 50S ribosomal subunit. Contacts protein L32.

The polypeptide is Large ribosomal subunit protein bL17 (Ruminiclostridium cellulolyticum (strain ATCC 35319 / DSM 5812 / JCM 6584 / H10) (Clostridium cellulolyticum)).